Consider the following 469-residue polypeptide: Glutamate--tRNA ligase 1 (469 aa).

A 'HIGH' region motif is present at residues 9–19 (PSPTGYLHVGG). 4 residues coordinate Zn(2+): C98, C100, C125, and E127. Residues 236-240 (RLSKR) carry the 'KMSKS' region motif. K239 contributes to the ATP binding site.

Belongs to the class-I aminoacyl-tRNA synthetase family. Glutamate--tRNA ligase type 1 subfamily. Monomer. Zn(2+) is required as a cofactor.

It localises to the cytoplasm. The catalysed reaction is tRNA(Glu) + L-glutamate + ATP = L-glutamyl-tRNA(Glu) + AMP + diphosphate. Functionally, catalyzes the attachment of glutamate to tRNA(Glu) in a two-step reaction: glutamate is first activated by ATP to form Glu-AMP and then transferred to the acceptor end of tRNA(Glu). The protein is Glutamate--tRNA ligase 1 of Nitrosococcus oceani (strain ATCC 19707 / BCRC 17464 / JCM 30415 / NCIMB 11848 / C-107).